We begin with the raw amino-acid sequence, 953 residues long: E3 ubiquitin-protein ligase ZNF598 (953 aa).

The segment covering lysine 25–histidine 39 has biased composition (basic residues). The segment at lysine 25–serine 47 is disordered. An RING-type zinc finger spans residues cysteine 57–arginine 97. The segment at proline 215–histidine 238 adopts a C2H2-type zinc-finger fold. Disordered regions lie at residues serine 299–serine 779 and glutamate 884–aspartate 911. Residues alanine 371–serine 380 show a composition bias toward low complexity. Residues histidine 381 to asparagine 409 show a composition bias toward basic and acidic residues. Composition is skewed to polar residues over residues asparagine 410–leucine 431 and leucine 467–glutamine 483. Serine 489 is modified (phosphoserine). 2 stretches are compositionally biased toward low complexity: residues glutamine 508 to alanine 518 and methionine 536 to serine 553. Polar residues-rich tracts occupy residues serine 555–serine 564 and leucine 641–threonine 650. The span at alanine 655–proline 666 shows a compositional bias: basic and acidic residues. Positions serine 695–threonine 711 are enriched in polar residues. The segment covering leucine 747 to glycine 765 has biased composition (pro residues). The segment covering proline 770–serine 779 has biased composition (polar residues).

It belongs to the ZNF598/HEL2 family.

The protein localises to the cytoplasm. It is found in the cytosol. It carries out the reaction S-ubiquitinyl-[E2 ubiquitin-conjugating enzyme]-L-cysteine + [acceptor protein]-L-lysine = [E2 ubiquitin-conjugating enzyme]-L-cysteine + N(6)-ubiquitinyl-[acceptor protein]-L-lysine.. Its pathway is protein modification; protein ubiquitination. Its function is as follows. E3 ubiquitin-protein ligase that plays a key role in the ribosome quality control (RQC), a pathway that takes place when a ribosome has stalled during translation, leading to degradation of nascent peptide chains. ZNF598 is activated when ribosomes are stalled within an mRNA following translation of prematurely polyadenylated mRNAs. Acts as a ribosome collision sensor: specifically recognizes and binds collided di-ribosome, which arises when a trailing ribosome encounters a slower leading ribosome, leading to terminally arrest translation. Following binding to colliding ribosomes, mediates monoubiquitination of 40S ribosomal proteins RPS10/eS10 and RPS3/uS3, and 'Lys-63'-linked polyubiquitination of RPS20/uS10. Polyubiquitination of RPS20/uS10 promotes recruitment of the RQT (ribosome quality control trigger) complex, which drives the disassembly of stalled ribosomes, followed by degradation of nascent peptides. This is E3 ubiquitin-protein ligase ZNF598 from Danio rerio (Zebrafish).